Consider the following 333-residue polypeptide: Dihydroorotate dehydrogenase (quinone) (333 aa).

Residues 56–60 (AGLDK) and Thr-80 contribute to the FMN site. A substrate-binding site is contributed by Lys-60. 105–109 (NRMGF) contributes to the substrate binding site. The FMN site is built by Asn-133 and Asn-166. A substrate-binding site is contributed by Asn-166. The active-site Nucleophile is Ser-169. Asn-171 is a substrate binding site. 2 residues coordinate FMN: Lys-211 and Thr-239. A substrate-binding site is contributed by 240 to 241 (NT). FMN contacts are provided by residues Gly-262, Gly-291, and 312 to 313 (YS).

The protein belongs to the dihydroorotate dehydrogenase family. Type 2 subfamily. As to quaternary structure, monomer. It depends on FMN as a cofactor.

Its subcellular location is the cell membrane. It carries out the reaction (S)-dihydroorotate + a quinone = orotate + a quinol. The protein operates within pyrimidine metabolism; UMP biosynthesis via de novo pathway; orotate from (S)-dihydroorotate (quinone route): step 1/1. Functionally, catalyzes the conversion of dihydroorotate to orotate with quinone as electron acceptor. The protein is Dihydroorotate dehydrogenase (quinone) of Legionella pneumophila (strain Lens).